The sequence spans 160 residues: Transcription antitermination protein NusB (160 aa).

This sequence belongs to the NusB family.

In terms of biological role, involved in transcription antitermination. Required for transcription of ribosomal RNA (rRNA) genes. Binds specifically to the boxA antiterminator sequence of the ribosomal RNA (rrn) operons. The sequence is that of Transcription antitermination protein NusB from Maricaulis maris (strain MCS10) (Caulobacter maris).